Here is a 154-residue protein sequence, read N- to C-terminus: Prefoldin subunit 2 (154 aa).

Disordered stretches follow at residues Met1–Ala20 and Leu126–Ser154. The segment covering Gly9–Lys18 has biased composition (gly residues). A compositionally biased stretch (basic and acidic residues) spans Leu126–Ser139. A compositionally biased stretch (low complexity) spans Gly141 to Ser154.

It belongs to the prefoldin subunit beta family. As to quaternary structure, heterohexamer of two PFD-alpha type and four PFD-beta type subunits. Component of the PAQosome complex which is responsible for the biogenesis of several protein complexes and which consists of R2TP complex members RUVBL1, RUVBL2, RPAP3 and PIH1D1, URI complex members PFDN2, PFDN6, PDRG1, UXT and URI1 as well as ASDURF, POLR2E and DNAAF10/WDR92. Interacts with URI1; the interaction is phosphorylation-dependent and occurs in a growth-dependent manner.

The protein localises to the nucleus. It is found in the cytoplasm. Its subcellular location is the mitochondrion. Functionally, binds specifically to cytosolic chaperonin (c-CPN) and transfers target proteins to it. Binds to nascent polypeptide chain and promotes folding in an environment in which there are many competing pathways for nonnative proteins. The polypeptide is Prefoldin subunit 2 (Pfdn2) (Rattus norvegicus (Rat)).